The primary structure comprises 96 residues: Small ribosomal subunit protein bS6 (96 aa).

Belongs to the bacterial ribosomal protein bS6 family.

In terms of biological role, binds together with bS18 to 16S ribosomal RNA. This is Small ribosomal subunit protein bS6 from Salinispora tropica (strain ATCC BAA-916 / DSM 44818 / JCM 13857 / NBRC 105044 / CNB-440).